Consider the following 161-residue polypeptide: Interleukin-17F (161 aa).

The signal sequence occupies residues 1–28; it reads MKCTRETAMVKSLLLLMLGLAILREVAA. Residue Asn83 is glycosylated (N-linked (GlcNAc...) asparagine). 2 disulfides stabilise this stretch: Cys100-Cys150 and Cys105-Cys152.

It belongs to the IL-17 family. As to quaternary structure, homodimer; disulfide-linked. Heterodimer with IL17A (IL17A-IL17F). Forms complexes with IL17RA and IL17RC receptors with 2:1 binding stoichiometry: two receptor chains for one interleukin molecule. IL17F homodimer forms predominantly complexes with IL17RC homodimer, whereas IL17A-IL17F favors complexes with IL17RA-IL17RC. IL17RA and IL17RC chains cannot distinguish between IL17A and IL17F molecules, potentially enabling the formation of topologically distinct complexes. As to expression, expressed by T-helper 17 cells (Th17) (at protein level). The expression pattern reflects the differentiation state. In fully differentiated Th17 cells, IL17A-IL17F heterodimers are produced at higher levels than IL17A-IL17A and IL17F-IL17F dimers. Dominantly secreted in intestine. Expressed by resident cells of the lamina propria, both epithelial cells and immune cell subsets including natural killer cells, dendritic cells, macrophages and various T and B cell subsets. Expressed by epithelial cells and innate immune cells in the colon. Expressed in group 3 innate lymphoid cells.

It is found in the secreted. In terms of biological role, effector cytokine of innate and adaptive immune system involved in antimicrobial host defense and maintenance of tissue integrity. IL17A-IL17F signals via IL17RA-IL17RC heterodimeric receptor complex, triggering homotypic interaction of IL17RA and IL17RC chains with TRAF3IP2 adapter through SEFIR domains. This leads to downstream TRAF6-mediated activation of NF-kappa-B and MAPkinase pathways ultimately resulting in transcriptional activation of cytokines, chemokines, antimicrobial peptides and matrix metalloproteinases, with potential strong immune inflammation. IL17A-IL17F is primarily involved in host defense against extracellular bacteria and fungi by inducing neutrophilic inflammation. As signature effector cytokine of T-helper 17 cells (Th17), primarily induces neutrophil activation and recruitment at infection and inflammatory sites. Stimulates the production of antimicrobial beta-defensins DEFB1, DEFB103A, and DEFB104A by mucosal epithelial cells, limiting the entry of microbes through the epithelial barriers. IL17F homodimer can signal via IL17RC homodimeric receptor complex, triggering downstream activation of TRAF6 and NF-kappa-B signaling pathway. Via IL17RC induces transcriptional activation of IL33, a potent cytokine that stimulates group 2 innate lymphoid cells and adaptive T-helper 2 cells involved in pulmonary allergic response to fungi. Likely via IL17RC, promotes sympathetic innervation of peripheral organs by coordinating the communication between gamma-delta T cells and parenchymal cells. Stimulates sympathetic innervation of thermogenic adipose tissue by driving TGFB1 expression. Regulates the composition of intestinal microbiota and immune tolerance by inducing antimicrobial proteins that specifically control the growth of commensal Firmicutes and Bacteroidetes. The protein is Interleukin-17F (Il17f) of Mus musculus (Mouse).